The primary structure comprises 297 residues: Bifonsecin B biosynthesis cluster protein A (297 aa).

The signal sequence occupies residues 1-20 (MHFWWTAISAGLLCLPQALG). N-linked (GlcNAc...) asparagine glycosylation is found at Asn26, Asn56, Asn75, Asn124, Asn175, Asn210, and Asn280.

The protein belongs to the bfoA family.

Part of the gene cluster that mediates the biosynthesis of bifonsecin B, a dimeric gamma-naphthopyrone. The first step in the biosynthesis of bifonsecin B is the production of gamma-naphthopyrone precursor YWA1 by the non-reducing polyketide synthase albA, via condensation of one acetyl-CoA starter unit with 6 malonyl-CoA units. YWA1 is then methylated by bfoE at position C-6 to yield foncesin which is further methylated at position C-8 by bfoD to produce fonsecin B. A key enzyme in the biosynthetic pathway is the cytochrome P450 monooxygenase bfoB which catalyzes the oxidative dimerization of fonsecin B to bifonsecin B. Bfob also catalyzes the oxidative dimerization of rubrofusarin B into nigerone. The stereoselectivity of bfoB is influenced by the two natural monomeric substrates; homodimerization of fonsecin B yields a stereochemically pure biaryl, M-foncerine B, while rubrofusarin B yields a mixture of enantiomers M- and P-nigerone. The function of bfoA within the bifonsecin B biosynthesis pathway has not been determined yet. The sequence is that of Bifonsecin B biosynthesis cluster protein A from Aspergillus brasiliensis (strain CBS 101740 / IMI 381727 / IBT 21946).